The chain runs to 413 residues: Multifunctional CCA protein (413 aa).

The ATP site is built by glycine 8 and arginine 11. Residues glycine 8 and arginine 11 each coordinate CTP. Mg(2+) contacts are provided by aspartate 21 and aspartate 23. 3 residues coordinate ATP: arginine 91, arginine 137, and arginine 140. Positions 91, 137, and 140 each coordinate CTP. Positions 228–329 (TGVHTLMTLS…VKLFDAIDAW (102 aa)) constitute an HD domain.

It belongs to the tRNA nucleotidyltransferase/poly(A) polymerase family. Bacterial CCA-adding enzyme type 1 subfamily. In terms of assembly, monomer. Can also form homodimers and oligomers. It depends on Mg(2+) as a cofactor. The cofactor is Ni(2+).

It catalyses the reaction a tRNA precursor + 2 CTP + ATP = a tRNA with a 3' CCA end + 3 diphosphate. The enzyme catalyses a tRNA with a 3' CCA end + 2 CTP + ATP = a tRNA with a 3' CCACCA end + 3 diphosphate. Catalyzes the addition and repair of the essential 3'-terminal CCA sequence in tRNAs without using a nucleic acid template. Adds these three nucleotides in the order of C, C, and A to the tRNA nucleotide-73, using CTP and ATP as substrates and producing inorganic pyrophosphate. tRNA 3'-terminal CCA addition is required both for tRNA processing and repair. Also involved in tRNA surveillance by mediating tandem CCA addition to generate a CCACCA at the 3' terminus of unstable tRNAs. While stable tRNAs receive only 3'-terminal CCA, unstable tRNAs are marked with CCACCA and rapidly degraded. In Salmonella typhimurium (strain LT2 / SGSC1412 / ATCC 700720), this protein is Multifunctional CCA protein.